The sequence spans 424 residues: Poly-cysteine and histidine-tailed protein (424 aa).

Residues 1-17 (MAFSTIVVLFVAAVGFG) form the signal peptide. A glycan (N-linked (GlcNAc...) asparagine) is linked at N291. The span at 372 to 390 (VGGKKQQKDQPESEKKAEN) shows a compositional bias: basic and acidic residues. The interval 372 to 424 (VGGKKQQKDQPESEKKAENMPETTGNASHHQHRHHHGDSSSESHEQHHHHHHH) is disordered. N397 carries N-linked (GlcNAc...) asparagine glycosylation.

Glycosylated. In terms of tissue distribution, expressed in larval tissues like cuticle, hypodermis and muscle (at protein level). Note=Not excreted into striated muscle fibers or nurse cell.

It localises to the secreted. Functionally, binds iron and zinc. May bind nickel. The sequence is that of Poly-cysteine and histidine-tailed protein from Trichinella spiralis (Trichina worm).